A 338-amino-acid polypeptide reads, in one-letter code: Protein RecA (338 aa).

68–75 (GPESSGKT) provides a ligand contact to ATP.

It belongs to the RecA family.

It is found in the cytoplasm. In terms of biological role, can catalyze the hydrolysis of ATP in the presence of single-stranded DNA, the ATP-dependent uptake of single-stranded DNA by duplex DNA, and the ATP-dependent hybridization of homologous single-stranded DNAs. It interacts with LexA causing its activation and leading to its autocatalytic cleavage. The sequence is that of Protein RecA from Citrifermentans bemidjiense (strain ATCC BAA-1014 / DSM 16622 / JCM 12645 / Bem) (Geobacter bemidjiensis).